The sequence spans 156 residues: Small ribosomal subunit protein uS7 (156 aa).

Belongs to the universal ribosomal protein uS7 family. In terms of assembly, part of the 30S ribosomal subunit. Contacts proteins S9 and S11.

Its function is as follows. One of the primary rRNA binding proteins, it binds directly to 16S rRNA where it nucleates assembly of the head domain of the 30S subunit. Is located at the subunit interface close to the decoding center, probably blocks exit of the E-site tRNA. The chain is Small ribosomal subunit protein uS7 from Sodalis glossinidius (strain morsitans).